A 403-amino-acid chain; its full sequence is Phosphoglycerate kinase (403 aa).

Residues 24–26 (DLN), Arg-39, 62–65 (HLGR), Arg-121, and Arg-161 each bind substrate. ATP contacts are provided by residues Lys-211, Gly-299, Glu-330, and 359 to 362 (GGDS).

The protein belongs to the phosphoglycerate kinase family. As to quaternary structure, monomer.

Its subcellular location is the cytoplasm. It carries out the reaction (2R)-3-phosphoglycerate + ATP = (2R)-3-phospho-glyceroyl phosphate + ADP. The protein operates within carbohydrate degradation; glycolysis; pyruvate from D-glyceraldehyde 3-phosphate: step 2/5. This chain is Phosphoglycerate kinase, found in Rhodococcus jostii (strain RHA1).